We begin with the raw amino-acid sequence, 198 residues long: MAQINPLPVPLGPWKITVYDQENFQGKRMEFTSSCANIMECGFDNIRSLKVECGAWIGYEHTSFCGQQFVLERGEYPRWDAWSGSNAYHIERLMSFRPICSANHIESKLVIFEKENFVGPQWELCDDYPSLQAMGWGNNEVGSMKVQCGAWVCYQYPGYRGYQYILESDHHGGEYKHWREWGSHAQTFQIQSIRRIQQ.

An N-terminal arm region spans residues 1–13; that stretch reads MAQINPLPVPLGP. 2 Beta/gamma crystallin 'Greek key' domains span residues 14–53 and 54–100; these read WKIT…KVEC and GAWI…RPIC. The segment at 101 to 106 is connecting peptide; sequence SANHIE. Beta/gamma crystallin 'Greek key' domains are found at residues 107-148 and 149-197; these read SKLV…KVQC and GAWV…RRIQ.

Belongs to the beta/gamma-crystallin family. As to quaternary structure, homo/heterodimer, or complexes of higher-order. The structure of beta-crystallin oligomers seems to be stabilized through interactions between the N-terminal arms. The N-terminus is blocked.

Its function is as follows. Crystallins are the dominant structural components of the vertebrate eye lens. This Aquarana catesbeiana (American bullfrog) protein is Beta-crystallin A1-2.